We begin with the raw amino-acid sequence, 93 residues long: Putative pterin-4-alpha-carbinolamine dehydratase (93 aa).

This sequence belongs to the pterin-4-alpha-carbinolamine dehydratase family.

It catalyses the reaction (4aS,6R)-4a-hydroxy-L-erythro-5,6,7,8-tetrahydrobiopterin = (6R)-L-erythro-6,7-dihydrobiopterin + H2O. This Thermomicrobium roseum (strain ATCC 27502 / DSM 5159 / P-2) protein is Putative pterin-4-alpha-carbinolamine dehydratase.